Reading from the N-terminus, the 105-residue chain is Heat shock protein HspQ (105 aa).

The tract at residues 84-105 (QPKLDELSASIKKQLKTPRLRN) is disordered. Basic residues predominate over residues 96–105 (KQLKTPRLRN).

Belongs to the HspQ family.

It localises to the cytoplasm. In terms of biological role, involved in the degradation of certain denaturated proteins, including DnaA, during heat shock stress. This Wigglesworthia glossinidia brevipalpis protein is Heat shock protein HspQ.